The chain runs to 429 residues: Ribosomal RNA small subunit methyltransferase B (429 aa).

S-adenosyl-L-methionine-binding positions include Cys-254 to Lys-260, Asp-277, Asp-303, and Asp-322. The Nucleophile role is filled by Cys-375. The disordered stretch occupies residues Ala-397–Asp-419. Residues Glu-400–Leu-412 show a composition bias toward polar residues.

This sequence belongs to the class I-like SAM-binding methyltransferase superfamily. RsmB/NOP family.

It is found in the cytoplasm. The catalysed reaction is cytidine(967) in 16S rRNA + S-adenosyl-L-methionine = 5-methylcytidine(967) in 16S rRNA + S-adenosyl-L-homocysteine + H(+). Specifically methylates the cytosine at position 967 (m5C967) of 16S rRNA. The sequence is that of Ribosomal RNA small subunit methyltransferase B from Salmonella heidelberg (strain SL476).